Reading from the N-terminus, the 464-residue chain is ATP synthase subunit beta (464 aa).

150 to 157 contacts ATP; that stretch reads GGAGVGKT.

This sequence belongs to the ATPase alpha/beta chains family. As to quaternary structure, F-type ATPases have 2 components, CF(1) - the catalytic core - and CF(0) - the membrane proton channel. CF(1) has five subunits: alpha(3), beta(3), gamma(1), delta(1), epsilon(1). CF(0) has three main subunits: a(1), b(2) and c(9-12). The alpha and beta chains form an alternating ring which encloses part of the gamma chain. CF(1) is attached to CF(0) by a central stalk formed by the gamma and epsilon chains, while a peripheral stalk is formed by the delta and b chains.

It is found in the cell membrane. It carries out the reaction ATP + H2O + 4 H(+)(in) = ADP + phosphate + 5 H(+)(out). In terms of biological role, produces ATP from ADP in the presence of a proton gradient across the membrane. The catalytic sites are hosted primarily by the beta subunits. The chain is ATP synthase subunit beta from Dehalococcoides mccartyi (strain ATCC BAA-2100 / JCM 16839 / KCTC 5957 / BAV1).